The sequence spans 370 residues: Asporin (370 aa).

Residues methionine 1–alanine 15 form the signal peptide. Residue serine 45 is glycosylated (O-linked (GalNAc...) serine). The LRRNT domain occupies phenylalanine 56–phenylalanine 92. 2 disulfides stabilise this stretch: cysteine 65–cysteine 71 and cysteine 69–cysteine 78. LRR repeat units follow at residues aspartate 93–glycine 114, serine 117–threonine 138, lysine 141–leucine 163, alanine 164–glycine 183, alanine 186–glycine 209, threonine 232–arginine 253, aspartate 256–asparagine 277, arginine 280–lysine 302, tyrosine 303–proline 324, serine 332–phenylalanine 354, and arginine 355–lysine 370. The N-linked (GlcNAc...) asparagine glycan is linked to asparagine 272. Cysteine 323 and cysteine 356 form a disulfide bridge.

The protein belongs to the small leucine-rich proteoglycan (SLRP) family. SLRP class I subfamily.

It is found in the secreted. Its subcellular location is the extracellular space. It localises to the extracellular matrix. In Bos taurus (Bovine), this protein is Asporin (ASPN).